A 514-amino-acid polypeptide reads, in one-letter code: Membrane-bound lytic murein transglycosylase F (514 aa).

An N-terminal signal peptide occupies residues 1 to 30 (MKKLKINYLFIGILTLLLAAALWPSIPWFG). The non-LT domain stretch occupies residues 31–269 (KTENHIAAIQ…RIEEKYLGHG (239 aa)). The tract at residues 270–514 (DDFDYVDTRS…LFTPQKKEEK (245 aa)) is LT domain. Glu-314 is a catalytic residue.

The protein in the N-terminal section; belongs to the bacterial solute-binding protein 3 family. It in the C-terminal section; belongs to the transglycosylase Slt family.

It localises to the cell outer membrane. It catalyses the reaction Exolytic cleavage of the (1-&gt;4)-beta-glycosidic linkage between N-acetylmuramic acid (MurNAc) and N-acetylglucosamine (GlcNAc) residues in peptidoglycan, from either the reducing or the non-reducing ends of the peptidoglycan chains, with concomitant formation of a 1,6-anhydrobond in the MurNAc residue.. In terms of biological role, murein-degrading enzyme that degrades murein glycan strands and insoluble, high-molecular weight murein sacculi, with the concomitant formation of a 1,6-anhydromuramoyl product. Lytic transglycosylases (LTs) play an integral role in the metabolism of the peptidoglycan (PG) sacculus. Their lytic action creates space within the PG sacculus to allow for its expansion as well as for the insertion of various structures such as secretion systems and flagella. This is Membrane-bound lytic murein transglycosylase F from Salmonella typhimurium (strain LT2 / SGSC1412 / ATCC 700720).